A 362-amino-acid chain; its full sequence is G-prodeshotein coupled receptor 4 (362 aa).

Residues 1–8 (MGNHTWEG) lie on the Extracellular side of the membrane. N-linked (GlcNAc...) asparagine glycosylation occurs at Asn-3. Residues 9–45 (CHVDSRVDHLFPPSLYIFVIGVGLPTNCLALWAAYRQ) traverse the membrane as a helical segment. Disulfide bonds link Cys-9/Cys-258 and Cys-90/Cys-168. Residues 46 to 49 (VQQR) lie on the Cytoplasmic side of the membrane. A helical membrane pass occupies residues 50 to 80 (NELGVYLMNLSIADLLYICTLPLWVDYFLHH). Topologically, residues 81–85 (DNWIH) are extracellular. A helical transmembrane segment spans residues 86–121 (GPGSCKLFGFIFYTNIYISIAFLCCISVDRYLAVAH). Over 122 to 129 (PLRFARLR) the chain is Cytoplasmic. A helical transmembrane segment spans residues 130 to 156 (RVKTAVAVSSVVWATELGANSAPLFHD). Residues 157–172 (ELFRDRYNHTFCFEKF) lie on the Extracellular side of the membrane. The extracellular loop 2 (ECL2) stretch occupies residues 157–172 (ELFRDRYNHTFCFEKF). Asn-164 carries N-linked (GlcNAc...) asparagine glycosylation. The chain crosses the membrane as a helical span at residues 173-210 (PMEGWVAWMNLYRVFVGFLFPWALMLLSYRGILRAVRG). The Cytoplasmic segment spans residues 211-214 (SVST). A helical membrane pass occupies residues 215 to 250 (ERQEKAKIKRLALSLIAIVLVCFAPYHVLLLSRSAI). Over 251–260 (YLGRPWDCGF) the chain is Extracellular. Residues 261-289 (EERVFSAYHSSLAFTSLNCVADPILYCLV) traverse the membrane as a helical segment. The Cytoplasmic portion of the chain corresponds to 290–362 (NEGARSDVAK…VQLKMLPPAQ (73 aa)). The disordered stretch occupies residues 335 to 362 (AKAMTGSWAATPPSQGDQVQLKMLPPAQ).

The protein belongs to the G-protein coupled receptor 1 family.

It is found in the cell membrane. With respect to regulation, activated by a network of residues that connects an extracellular-facing cavity to Glu-145, a conserved charged residue buried in the transmembrane core of the receptor. Protonation likely drives conformational changes in extracellular loop 2 (ECL2), which stabilizes movement of transmembrane 3 (TM3) and a series of rearrangements that connect the extracellular-facing cavity to Glu-145, a residue only conserved in proton-sensing G-protein coupled receptors. Functionally, proton-sensing G-protein coupled receptor activated by extracellular pH, which is required to monitor pH changes and generate adaptive reactions. Activated by an optimal pH of 6.8-7.2. Ligand binding causes a conformation change that triggers signaling via guanine nucleotide-binding proteins (G proteins) and modulates the activity of downstream effectors, such as adenylate cyclase. GPR4 is mainly coupled to G(s) G proteins and mediates activation of adenylate cyclase activity. May also couple with G(q) and G(12)/G(13) G proteins. Acts as a key regulator of respiratory sensitivity to CO2/H(+) in brain retrotrapezoid nucleus neurons: acts by mediating detection of protons generated by the formation of carbonic acid in the blood, an important mechanism to impulse to breathe. Also acts as a regulator of acid secretion in the kidney collecting duct by maintaining acid-base homeostasis in the kidney. Acidosis-induced GPR4 activation increases paracellular gap formation and permeability of vascular endothelial cells, possibly through the G(12)/G(13)/Rho GTPase signaling pathway. This Homo sapiens (Human) protein is G-prodeshotein coupled receptor 4.